Here is a 236-residue protein sequence, read N- to C-terminus: uncharacterized protein (236 aa).

Residues glycine 15–phenylalanine 34 form a helical membrane-spanning segment. Positions lysine 36–alanine 71 form a coiled coil. Disordered regions lie at residues serine 83–lysine 113 and alanine 185–glutamate 236. 2 stretches are compositionally biased toward polar residues: residues glutamine 93 to glycine 102 and alanine 185 to proline 195. A compositionally biased stretch (basic and acidic residues) spans alanine 225–glutamate 236.

Its subcellular location is the membrane. This is an uncharacterized protein from Aedes vexans (Inland floodwater mosquito).